A 356-amino-acid chain; its full sequence is MTRLTLALDVMGGDFGPSVTVPAALQALNSNSQLTLLLVGNPDAITPLLAKADFEQRSRLQIIPAQSVIASDVRPSQAIRASRGSSMRVALELVKEGRAQACVSAGNTGALMGLAKLLLKPLEGIERPALVTVLPHQQKGKTVVLDLGANVDCDSTMLVQFAIMGSVLAEEVVEIPNPRVALLNIGEEEVKGLDSIRDASAVLKTIPSINYIGYLEANELLTGKTDVLVCDGFTGNVTLKTMEGVVRMFLSLLKSQGEGKKRSWWLLLLKRWLQKSLTRRFSHLNPDQYNGACLLGLRGTVIKSHGAANQRAFAVAIEQAVQAVQRQVPQRIAARLESVYPAGFELLDGGKSGTLR.

The protein belongs to the PlsX family. As to quaternary structure, homodimer. Probably interacts with PlsY.

The protein resides in the cytoplasm. It carries out the reaction a fatty acyl-[ACP] + phosphate = an acyl phosphate + holo-[ACP]. Its pathway is lipid metabolism; phospholipid metabolism. Functionally, catalyzes the reversible formation of acyl-phosphate (acyl-PO(4)) from acyl-[acyl-carrier-protein] (acyl-ACP). This enzyme utilizes acyl-ACP as fatty acyl donor, but not acyl-CoA. The polypeptide is Phosphate acyltransferase (Escherichia coli (strain 55989 / EAEC)).